Here is a 243-residue protein sequence, read N- to C-terminus: MPSGMFSIDNILAARPRCKESLLLPQNGPLLFSSLGESLYGPADYSGFYNRTVAPTSALQGVNGSRLGYNNYYYGQLHLQTPVGPSCCGAVQALGTQQCSCVPSATAYDGAGSVLIPPVPHQMLPYMNVGTLSRTELQLLNQLHCRRKRRHRTIFTDEQLEALENLFQETKYPDVGTREQLARRVHLREEKVEVWFKNRRAKWRRQKRSSSEESENAQKWNKSSKNSAEKRDEQAKSDLDSDS.

A DNA-binding region (homeobox) is located at residues 148 to 207 (KRRHRTIFTDEQLEALENLFQETKYPDVGTREQLARRVHLREEKVEVWFKNRRAKWRRQK). The disordered stretch occupies residues 201–243 (AKWRRQKRSSSEESENAQKWNKSSKNSAEKRDEQAKSDLDSDS). Residues 217 to 226 (AQKWNKSSKN) are compositionally biased toward polar residues. A compositionally biased stretch (basic and acidic residues) spans 227–243 (SAEKRDEQAKSDLDSDS).

The protein belongs to the paired homeobox family. Bicoid subfamily.

The protein localises to the nucleus. In terms of biological role, plays a central role in executing Spemann's organizer phenomenon (the dorsal blastopore lip of the early Xenopus laevis gastrula can organize a complete secondary body axis when transplanted to another embryo). This Xenopus laevis (African clawed frog) protein is Homeobox protein goosecoid isoform B (gsc-b).